A 421-amino-acid polypeptide reads, in one-letter code: Alpha-1-antitrypsin-related protein (421 aa).

The N-terminal stretch at methionine 1–serine 21 is a signal peptide. 4 N-linked (GlcNAc...) asparagine glycosylation sites follow: asparagine 56, asparagine 110, asparagine 148, and asparagine 274.

Belongs to the serpin family. Interacts with CANX and PDIA3. Glycosylated. As to expression, expressed in the liver, leukocytes and testis. Also detected in brain, colon, uterus, esophagus, spleen, trachea, kidney and lung.

It localises to the endoplasmic reticulum. In terms of biological role, putative serine protease inhibitor. This Homo sapiens (Human) protein is Alpha-1-antitrypsin-related protein (SERPINA2).